The following is a 499-amino-acid chain: Aldehyde dehydrogenase 1 (499 aa).

NAD(+)-binding positions include 164 to 166, 164 to 167, 190 to 193, 223 to 224, 243 to 244, 243 to 248, and 266 to 268; these read IPW, IPWN, KPAE, GS, GSTKVG, and ELG. Glu-266 functions as the Proton acceptor in the catalytic mechanism. Cys-300 functions as the Nucleophile in the catalytic mechanism. NAD(+) is bound by residues 346–350 and 397–399; these read QQYEK and EIF.

Belongs to the aldehyde dehydrogenase family. Homotetramer. As to expression, expressed in flowers and disk florets.

The enzyme catalyses an aldehyde + NAD(+) + H2O = a carboxylate + NADH + 2 H(+). It carries out the reaction an aldehyde + NADP(+) + H2O = a carboxylate + NADPH + 2 H(+). The catalysed reaction is octanal + NADP(+) + H2O = octanoate + NADPH + 2 H(+). It catalyses the reaction (1R,3R)-chrysanthemal + NAD(+) + H2O = (1R,3R)-chrysanthemate + NADH + 2 H(+). The enzyme catalyses (1R,3R)-chrysanthemal + NADP(+) + H2O = (1R,3R)-chrysanthemate + NADPH + 2 H(+). It carries out the reaction (E)-hept-2-enal + NADP(+) + H2O = (E)-hept-2-enoate + NADPH + 2 H(+). The catalysed reaction is dodecanal + NADP(+) + H2O = dodecanoate + NADPH + 2 H(+). It catalyses the reaction citral + NADP(+) + H2O = 3,7-dimethylocta-2,6-dienoate + NADPH + 2 H(+). The enzyme catalyses perillyl aldehyde + NADP(+) + H2O = perillate + NADPH + 2 H(+). It carries out the reaction (2E,6E)-farnesal + NADP(+) + H2O = (2E,6E)-farnesoate + NADPH + 2 H(+). The catalysed reaction is (S)-(-)-citronellal + NADP(+) + H2O = (S)-(-)-citronellate + NADPH + 2 H(+). Its pathway is isoprenoid biosynthesis. In terms of biological role, component of the monoterpenoid pyrethrins biosynthesis; pyrethrins are widely used plant-derived pesticide. Mediates the conversion of trans-chrysanthemal into trans-chrysanthemic acid. Can also use octanal, hept-2-enal, dodecanal, citral, farnesal, citronellal and perillyl aldehyde as substrates. The polypeptide is Aldehyde dehydrogenase 1 (Tanacetum cinerariifolium (Dalmatian daisy)).